The primary structure comprises 555 residues: 2-succinyl-5-enolpyruvyl-6-hydroxy-3-cyclohexene-1-carboxylate synthase (555 aa).

It belongs to the TPP enzyme family. MenD subfamily. In terms of assembly, homodimer. It depends on Mg(2+) as a cofactor. Mn(2+) is required as a cofactor. Thiamine diphosphate serves as cofactor.

The catalysed reaction is isochorismate + 2-oxoglutarate + H(+) = 5-enolpyruvoyl-6-hydroxy-2-succinyl-cyclohex-3-ene-1-carboxylate + CO2. Its pathway is quinol/quinone metabolism; 1,4-dihydroxy-2-naphthoate biosynthesis; 1,4-dihydroxy-2-naphthoate from chorismate: step 2/7. The protein operates within quinol/quinone metabolism; menaquinone biosynthesis. Its function is as follows. Catalyzes the thiamine diphosphate-dependent decarboxylation of 2-oxoglutarate and the subsequent addition of the resulting succinic semialdehyde-thiamine pyrophosphate anion to isochorismate to yield 2-succinyl-5-enolpyruvyl-6-hydroxy-3-cyclohexene-1-carboxylate (SEPHCHC). The chain is 2-succinyl-5-enolpyruvyl-6-hydroxy-3-cyclohexene-1-carboxylate synthase from Cronobacter sakazakii (strain ATCC BAA-894) (Enterobacter sakazakii).